Reading from the N-terminus, the 182-residue chain is NAD(P)H-quinone oxidoreductase subunit I, chloroplastic (182 aa).

4Fe-4S ferredoxin-type domains follow at residues 52–81 (GRIHFEFDKCIACEVCVRVCPINLPVVDWE) and 92–121 (KSYSIDFGVCIFCGNCVEYCPTNCLSMTEE). [4Fe-4S] cluster is bound by residues cysteine 61, cysteine 64, cysteine 67, cysteine 71, cysteine 101, cysteine 104, cysteine 107, and cysteine 111.

This sequence belongs to the complex I 23 kDa subunit family. As to quaternary structure, NDH is composed of at least 16 different subunits, 5 of which are encoded in the nucleus. [4Fe-4S] cluster is required as a cofactor.

It is found in the plastid. The protein localises to the chloroplast thylakoid membrane. The enzyme catalyses a plastoquinone + NADH + (n+1) H(+)(in) = a plastoquinol + NAD(+) + n H(+)(out). It catalyses the reaction a plastoquinone + NADPH + (n+1) H(+)(in) = a plastoquinol + NADP(+) + n H(+)(out). Its function is as follows. NDH shuttles electrons from NAD(P)H:plastoquinone, via FMN and iron-sulfur (Fe-S) centers, to quinones in the photosynthetic chain and possibly in a chloroplast respiratory chain. The immediate electron acceptor for the enzyme in this species is believed to be plastoquinone. Couples the redox reaction to proton translocation, and thus conserves the redox energy in a proton gradient. The chain is NAD(P)H-quinone oxidoreductase subunit I, chloroplastic from Chaetosphaeridium globosum (Charophycean green alga).